A 100-amino-acid polypeptide reads, in one-letter code: Large ribosomal subunit protein uL23 (100 aa).

The protein belongs to the universal ribosomal protein uL23 family. As to quaternary structure, part of the 50S ribosomal subunit. Contacts protein L29, and trigger factor when it is bound to the ribosome.

Its function is as follows. One of the early assembly proteins it binds 23S rRNA. One of the proteins that surrounds the polypeptide exit tunnel on the outside of the ribosome. Forms the main docking site for trigger factor binding to the ribosome. The protein is Large ribosomal subunit protein uL23 of Bradyrhizobium diazoefficiens (strain JCM 10833 / BCRC 13528 / IAM 13628 / NBRC 14792 / USDA 110).